A 542-amino-acid chain; its full sequence is Glucans biosynthesis protein D (542 aa).

The tat-type signal signal peptide spans 1 to 31 (MHRRNLLKASMAIAAYTGLSATGLLASRAWA).

The protein belongs to the OpgD/OpgG family. In terms of processing, predicted to be exported by the Tat system. The position of the signal peptide cleavage has not been experimentally proven.

Its subcellular location is the periplasm. It participates in glycan metabolism; osmoregulated periplasmic glucan (OPG) biosynthesis. Probably involved in the control of the structural glucose backbone of osmoregulated periplasmic glucans (OPGs). The polypeptide is Glucans biosynthesis protein D (Pseudomonas fluorescens (strain Pf0-1)).